The primary structure comprises 251 residues: L,D-transpeptidase 1 (251 aa).

The signal sequence occupies residues 1-28 (MRRVVRYLSVVVAITLMLTAESVSIATA). Residues 125-250 (LIGVASISAH…VTVGDPIEVV (126 aa)) form the L,D-TPase catalytic domain. Substrate is bound by residues Tyr190 and 203 to 204 (SG). His208 (proton donor/acceptor) is an active-site residue. Cys226 acts as the Nucleophile in catalysis. Asn228 provides a ligand contact to substrate.

In terms of assembly, monomer.

Its subcellular location is the periplasm. It functions in the pathway cell wall biogenesis; peptidoglycan biosynthesis. Is irreversibly inactivated by the beta-lactams carbapenems via the formation of a covalent adduct resulting from acylation of the catalytic Cys. Functionally, generates 3-&gt;3 cross-links in peptidoglycan, catalyzing the cleavage of the mDap(3)-D-Ala(4) bond of a tetrapeptide donor stem and the formation of a bond between the carbonyl of mDap(3) of the donor stem and the side chain of mDap(3) of the acceptor stem. Is specific for donor substrates containing a stem tetrapeptide since it cannot use pentapeptide stems. This Mycobacterium tuberculosis (strain CDC 1551 / Oshkosh) protein is L,D-transpeptidase 1 (ldtA).